Reading from the N-terminus, the 492-residue chain is Replication factor C large subunit (492 aa).

46–53 (GPPGSGKT) lines the ATP pocket. Positions 445–492 (VIPKRPKISDNQISEILTKDNNPKDDVKKASKKPESTSKKQATLDKFF) are disordered. A compositionally biased stretch (basic and acidic residues) spans 461–482 (LTKDNNPKDDVKKASKKPESTS).

Belongs to the activator 1 small subunits family. RfcL subfamily. Heteromultimer composed of small subunits (RfcS) and large subunits (RfcL).

In terms of biological role, part of the RFC clamp loader complex which loads the PCNA sliding clamp onto DNA. The polypeptide is Replication factor C large subunit (Methanococcus vannielii (strain ATCC 35089 / DSM 1224 / JCM 13029 / OCM 148 / SB)).